We begin with the raw amino-acid sequence, 241 residues long: Queuine tRNA-ribosyltransferase-like protein (241 aa).

This sequence belongs to the queuine tRNA-ribosyltransferase family.

The sequence is that of Queuine tRNA-ribosyltransferase-like protein from Plasmodium falciparum.